Consider the following 525-residue polypeptide: MSDIHEHKILILDFGSQYTQLIARRIREIGVYCELWAWDVTEAQIREFAPNGIILAGGPESVTAENSPRAPEYVFNAGIPVLGICYGMQTMSEQLGGKVIQGVGEGEFGYAQIEMLTKSALFKDIEDAVNSEGKPLLDVWMSHGDKVSAIPEGFVAVAKTDTCPFAAMANEEKRFYGVQFHPEVTHTRQGMRMLSHFALDICGCAANWKPSSIIEDAIERLKKQIGDDEVILGLSGGVDSSVVAMLLHRAIGKKLTCVFVDNGLLRLNEAAQVMEMFGDHFGLNIIHVDAENRFLDAMKGVADPEAKRKIIGRVFVEIFDEESKKCANAKWLAQGTIYPDVIESAGSATGKAHVIKSHHNVGGLPDDMALGLVEPLRELFKDEVRKIGLELGLPYNMLYRHPFPGPGLGVRVLGEVKKEYCDLLRRADAIFIEELHKADLYNKVSQAFTVFLPVRSVGVMGDGRKYDWVVSLRAVETIDFMTAHWAHLPYDFLGRVSNRIINEVDGISRVVYDISGKPPATIEWE.

Positions 8–207 (KILILDFGSQ…ALDICGCAAN (200 aa)) constitute a Glutamine amidotransferase type-1 domain. The active-site Nucleophile is the Cys-85. Catalysis depends on residues His-181 and Glu-183. The GMPS ATP-PPase domain occupies 208 to 400 (WKPSSIIEDA…LGLPYNMLYR (193 aa)). 235 to 241 (SGGVDSS) contributes to the ATP binding site.

As to quaternary structure, homodimer.

It catalyses the reaction XMP + L-glutamine + ATP + H2O = GMP + L-glutamate + AMP + diphosphate + 2 H(+). It participates in purine metabolism; GMP biosynthesis; GMP from XMP (L-Gln route): step 1/1. Functionally, catalyzes the synthesis of GMP from XMP. The protein is GMP synthase [glutamine-hydrolyzing] of Shewanella putrefaciens (strain CN-32 / ATCC BAA-453).